A 1693-amino-acid polypeptide reads, in one-letter code: Non-structural polyprotein pORF1 (1693 aa).

An Alphavirus-like MT domain is found at 56–240; it reads VFRPEVFWNH…HDVSNLRSWI (185 aa). The tract at residues 60 to 240 is methyltransferase; it reads EVFWNHPIQR…HDVSNLRSWI (181 aa). Residues 241–439 are Y-domain; it reads RTTKVTGDHP…FYAQCRRWLS (199 aa). An intrachain disulfide couples Cys434 to Cys481. The putative protease stretch occupies residues 442–509; it reads FHLDPRVLVF…EAYEGSDVDP (68 aa). Residues 510 to 691 form a zinc-binding region; the sequence is AESAISDISG…FSPGHVWESA (182 aa). Residues His671, Glu673, and His686 each coordinate Zn(2+). Positions 712–778 are hinge; it reads SSPARPDLGF…AITHQTARHR (67 aa). Residues 732–768 are disordered; the sequence is ATPTLAAPLPPPAPDPSPPPSAPALAEPASGATAGAP. A compositionally biased stretch (pro residues) spans 739 to 753; that stretch reads PLPPPAPDPSPPPSA. A compositionally biased stretch (low complexity) spans 754–768; the sequence is PALAEPASGATAGAP. Residues 775-921 enclose the Macro domain; the sequence is ARHRRLLFTY…LYLPELAARW (147 aa). The interval 785–942 is X-domain; it reads PDGSKVFAGS…TITEDVARTA (158 aa). One can recognise a (+)RNA virus helicase ATP-binding domain in the interval 934 to 1082; the sequence is ITEDVARTAN…RPDLGPTSWW (149 aa). The segment at 960–1204 is NTPase/helicase; sequence GCRVTPGVVQ…ISDAIVNNFF (245 aa). 975–982 lines the ATP pocket; that stretch reads GVPGSGKS. Residues 1083–1216 form the (+)RNA virus helicase C-terminal domain; the sequence is HVTHRWPADV…GGEIGHQRPS (134 aa). The RNA-directed RNA polymerase stretch occupies residues 1207 to 1693; it reads GGEIGHQRPS…LTNSILCRVE (487 aa). One can recognise a RdRp catalytic domain in the interval 1454–1565; sequence SMVFENDFSE…LCSEYRQSPG (112 aa).

This sequence belongs to the hepevirus non-structural polyprotein family. In terms of assembly, the protease domain interacts with host EIF2AK4 (via C-terminus); this interaction inhibits dimerization of EIF2AK4 and prevents EIF2AK4-mediated phosphorylation of host EIF2A. Mg(2+) is required as a cofactor. Post-translationally, ORF1 polyprotein does not seem to be processed into distinct enzymatic domains by a viral protease belonging to ORF1, but could be processed by a host serine protease like thrombin.

Its subcellular location is the host cytoplasm. It localises to the host perinuclear region. The catalysed reaction is RNA(n) + a ribonucleoside 5'-triphosphate = RNA(n+1) + diphosphate. It catalyses the reaction GTP + S-adenosyl-L-methionine = N(7)-methyl-GTP + S-adenosyl-L-homocysteine. With respect to regulation, putative protease: Inhibited by chymostatin. Functionally, methyltransferase: Displays a capping enzyme activity. This function is necessary since all viral RNAs are synthesized in the cytoplasm, and host capping enzymes are restricted to the nucleus. The enzymatic reaction involves a covalent link between 7-methyl-GMP and the methyltransferase, whereas eukaryotic capping enzymes form a covalent complex only with GMP. Methyltransferase catalyzes transfer of a methyl group from S-adenosylmethionine to GTP and GDP to yield m(7)GTP or m(7)GDP. GDP is a better substrate than GTP. This enzyme also displays guanylyltransferase activity to form a covalent complex, methyltransferase-m(7)GMP, from which 7-methyl-GMP is transferred to the mRNA to create the cap structure. Its function is as follows. Y-domain: Indispensable for virus replication. In terms of biological role, putative protease: The putative protease domain although necessary for replication of the virus may not be a protease but rather a structural Zn(2+)-binding domain. Inhibits induction of IFN-beta by MDA5 and RIG-I pathways and down-regulates the expression of MDA5. NTPase/helicase: Multi-functional protein that exhibits NTPase and RNA unwinding activities. Hydrolyzes all NTPs efficiently and unwinds RNA duplexes containing 5' overhangs. Possesses a sequence independent RNA-5'-triphosphatase (RTPase) activity suggestive of its role in forming viral cap structure. Also participates in viral genome replication, RNA translocation and genome packaging/unpackaging. Functionally, RNA-directed RNA polymerase: Plays an essential role in the virus replication. Binds to the 3'-end of the genomic RNA to initiate viral replication. The protein is Non-structural polyprotein pORF1 of Homo sapiens (Human).